We begin with the raw amino-acid sequence, 195 residues long: dTTP/UTP pyrophosphatase (195 aa).

Catalysis depends on Asp-73, which acts as the Proton acceptor.

It belongs to the Maf family. YhdE subfamily. The cofactor is a divalent metal cation.

Its subcellular location is the cytoplasm. It catalyses the reaction dTTP + H2O = dTMP + diphosphate + H(+). It carries out the reaction UTP + H2O = UMP + diphosphate + H(+). Nucleoside triphosphate pyrophosphatase that hydrolyzes dTTP and UTP. May have a dual role in cell division arrest and in preventing the incorporation of modified nucleotides into cellular nucleic acids. This Desulfotalea psychrophila (strain LSv54 / DSM 12343) protein is dTTP/UTP pyrophosphatase.